Consider the following 693-residue polypeptide: Translation initiation factor IF-2 (693 aa).

Residues 181-349 (PRPPVVTVMG…MILLVAEMNE (169 aa)) enclose the tr-type G domain. A G1 region spans residues 190 to 197 (GHVDHGKT). 190–197 (GHVDHGKT) is a GTP binding site. Residues 215 to 219 (GITQS) form a G2 region. Residues 236-239 (DTPG) are G3. GTP contacts are provided by residues 236–240 (DTPGH) and 290–293 (NKID). Residues 290-293 (NKID) form a G4 region. Residues 327–329 (SAR) are G5.

The protein belongs to the TRAFAC class translation factor GTPase superfamily. Classic translation factor GTPase family. IF-2 subfamily.

Its subcellular location is the cytoplasm. In terms of biological role, one of the essential components for the initiation of protein synthesis. Protects formylmethionyl-tRNA from spontaneous hydrolysis and promotes its binding to the 30S ribosomal subunits. Also involved in the hydrolysis of GTP during the formation of the 70S ribosomal complex. This chain is Translation initiation factor IF-2, found in Thermotoga petrophila (strain ATCC BAA-488 / DSM 13995 / JCM 10881 / RKU-1).